The following is a 183-amino-acid chain: Probable GTP-binding protein EngB (183 aa).

An EngB-type G domain is found at 17–183 (DYPEVVFVGR…KKELLSRILN (167 aa)). GTP contacts are provided by residues 25 to 32 (GRSNVGKS), 51 to 55 (GRTRA), 69 to 72 (DVPG), 137 to 140 (TKID), and 166 to 168 (SSA). Residues serine 32 and threonine 53 each coordinate Mg(2+).

The protein belongs to the TRAFAC class TrmE-Era-EngA-EngB-Septin-like GTPase superfamily. EngB GTPase family. The cofactor is Mg(2+).

Necessary for normal cell division and for the maintenance of normal septation. In Aquifex aeolicus (strain VF5), this protein is Probable GTP-binding protein EngB.